We begin with the raw amino-acid sequence, 365 residues long: Putative F-box/kelch-repeat protein At3g16880 (365 aa).

Residues 1-47 enclose the F-box domain; that stretch reads MTKMSKLPNDLLEEILSRSPLYSMRAIRLTCKKWNTLAKEESFTKKQ. 2 Kelch repeats span residues 98-149 and 155-205; these read RVYH…TKKS and ILSS…VKGN.

This Arabidopsis thaliana (Mouse-ear cress) protein is Putative F-box/kelch-repeat protein At3g16880.